The following is a 618-amino-acid chain: Methionine--tRNA ligase (618 aa).

A 'HIGH' region motif is present at residues Tyr12 to His22. Cys127, Cys130, Cys144, and His147 together coordinate Zn(2+). The short motif at Lys297–Thr301 is the 'KMSKS' region element. Lys300 lines the ATP pocket. A tRNA-binding domain is found at Asp518–Lys618.

The protein belongs to the class-I aminoacyl-tRNA synthetase family. MetG type 2A subfamily. As to quaternary structure, homodimer. Zn(2+) serves as cofactor.

It is found in the cytoplasm. The enzyme catalyses tRNA(Met) + L-methionine + ATP = L-methionyl-tRNA(Met) + AMP + diphosphate. In terms of biological role, is required not only for elongation of protein synthesis but also for the initiation of all mRNA translation through initiator tRNA(fMet) aminoacylation. The sequence is that of Methionine--tRNA ligase (metG) from Thermus thermophilus (strain ATCC 27634 / DSM 579 / HB8).